We begin with the raw amino-acid sequence, 287 residues long: Ribosomal RNA small subunit methyltransferase I (287 aa).

Belongs to the methyltransferase superfamily. RsmI family.

It is found in the cytoplasm. It catalyses the reaction cytidine(1402) in 16S rRNA + S-adenosyl-L-methionine = 2'-O-methylcytidine(1402) in 16S rRNA + S-adenosyl-L-homocysteine + H(+). In terms of biological role, catalyzes the 2'-O-methylation of the ribose of cytidine 1402 (C1402) in 16S rRNA. This Streptococcus pyogenes serotype M18 (strain MGAS8232) protein is Ribosomal RNA small subunit methyltransferase I.